Reading from the N-terminus, the 284-residue chain is MEMO1 family protein LS215_2219 (284 aa).

The protein belongs to the MEMO1 family.

The protein is MEMO1 family protein LS215_2219 of Saccharolobus islandicus (strain L.S.2.15 / Lassen #1) (Sulfolobus islandicus).